The chain runs to 87 residues: MENDKGQLVELYVPRKCSATNRIIKAKDHASVQISIAKVDEDGRAIAGENITYALSGYVRGRGEADDSLNRLAQQDGLLKNVWSYSR.

This sequence belongs to the eukaryotic ribosomal protein eS21 family. Component of the small ribosomal subunit. Mature ribosomes consist of a small (40S) and a large (60S) subunit. The 40S subunit contains about 33 different proteins and 1 molecule of RNA (18S). The 60S subunit contains about 49 different proteins and 3 molecules of RNA (25S, 5.8S and 5S).

It is found in the cytoplasm. In terms of biological role, required for the processing of the 20S rRNA-precursor to mature 18S rRNA in a late step of the maturation of 40S ribosomal subunits. Has a physiological role leading to 18S rRNA stability. The polypeptide is Small ribosomal subunit protein eS21 (RPS21) (Candida albicans (Yeast)).